Here is a 789-residue protein sequence, read N- to C-terminus: Zinc finger protein GLIS1 (789 aa).

2 stretches are compositionally biased toward basic and acidic residues: residues 1-16 and 63-74; these read MHCE…RPKE and RAHDLLRPRSPR. Disordered stretches follow at residues 1–29, 53–93, and 278–304; these read MHCE…GPVS, LLPR…YGHS, and PPLP…QEGS. Residues 80–92 show a composition bias toward polar residues; that stretch reads KTGSGKVNGSYGH. The C2H2-type 1 zinc-finger motif lies at 366-391; that stretch reads QACRWVDCCAAYEQQEELVRHIEKSH. The segment at 400 to 427 adopts a C2H2-type 2; atypical zinc-finger fold; it reads FTCFWAGCVRRYKPFNARYKLLIHMRVH. 3 C2H2-type zinc fingers span residues 433–457, 463–487, and 493–517; these read NKCM…LRSH, YLCQ…QRTH, and YACQ…VKAH. Disordered regions lie at residues 506–529 and 573–684; these read DPSS…KKLH and VYPG…QGYQ. The short motif at 511-527 is the Bipartite nuclear localization signal element; the sequence is RKHVKAHSAKEQQVRKK. Low complexity predominate over residues 648-658; that stretch reads ASQSQSPGGQS.

Belongs to the GLI C2H2-type zinc-finger protein family. As to quaternary structure, interacts with KLF4. Interacts with POU5F1 and/or POU5F1B. Interacts with SOX2. As to expression, in the adult, expressed highly in placenta and kidney and at lower levels in the testis, brain, colon, brown fat tissue and thymus. During embryo development, expressed in the frontal nasal region, branchial arches, somites, vibrissal and hair follicles, limb buds, craniofacial regions, ventral part of the tail, intervertebral disks, teeth, eyes and kidney.

It localises to the nucleus. Its function is as follows. Acts both as a repressor and an ctivator of transcription. Binds to the consensus sequence 5'-GACCACCCAC-3'. By controlling the expression of genes involved in cell differentiation inhibits the lineage commitment of multipotent cells. Prevents, for instance, the differentiation of multipotent mesenchymal cells into adipocyte and osteoblast. In Mus musculus (Mouse), this protein is Zinc finger protein GLIS1.